The sequence spans 299 residues: UBX domain-containing protein 1 (299 aa).

Disordered regions lie at residues 39–61, 127–176, and 191–218; these read AGVP…SGAP, KAKL…NEDE, and EARK…APPK. Over residues 46–61 the composition is skewed to low complexity; sequence DAPAQAAPGAADSGAP. Positions 111–179 form a coiled coil; it reads AKVLEIREKI…REKNEDEIAR (69 aa). The span at 128-176 shows a compositional bias: basic and acidic residues; that stretch reads AKLEAEENREKEKKRREDGKAMISHKEAARDREIREAAQDRRREKNEDE. A compositionally biased stretch (low complexity) spans 201-213; the sequence is PVPEAKPAPSAAP. The region spanning 218–295 is the UBX domain; it reads KDYSTTTLQF…NLVPSANVIL (78 aa).

As to quaternary structure, interacts with cdc-48.1 (via N-terminus) and cdc-48.2 (via N-terminus) in vitro; the interaction with cdc-48.1 is not detected in vivo. As to expression, expressed in the germline (at protein level). Expressed in spermatocytes but not in mature sperm (at protein level). Ubiquitously expressed. Predominantly expressed in the spermatheca.

The protein localises to the cytoplasm. The protein resides in the perinuclear region. Functionally, ubiquitin-binding protein which acts as an adapter for ATPase cdc-48.1 and/or cdc-48.2, conferring substrate specificity. Together with ubxn-2 and ubxn-3, plays a role in hermaphrodite spermatogenesis probably by promoting the degradation of sex determination terminal factor tra-1. This is UBX domain-containing protein 1 from Caenorhabditis elegans.